Here is a 200-residue protein sequence, read N- to C-terminus: Large ribosomal subunit protein bL25 (200 aa).

The protein belongs to the bacterial ribosomal protein bL25 family. CTC subfamily. In terms of assembly, part of the 50S ribosomal subunit; part of the 5S rRNA/L5/L18/L25 subcomplex. Contacts the 5S rRNA. Binds to the 5S rRNA independently of L5 and L18.

Functionally, this is one of the proteins that binds to the 5S RNA in the ribosome where it forms part of the central protuberance. In Pseudomonas fluorescens (strain SBW25), this protein is Large ribosomal subunit protein bL25.